Consider the following 442-residue polypeptide: MHISRPRRVAVLSVHTSPLAQPGTGDAGGMNVYVLQSAIQLAKRGVEVEIFTRATSSADAPVVDAAPGVRVRNIAAGPFEGLDKADLPTQLCAFVAGVLREEARHEPGYYSLIHSHYWLSGQVGWLARDRWGVPLVHTAHTLAAVKNLSLAEGDTPEPAARQIGEQQVVAESDRLVANTTDEAKALHELYGADPTRIDVVAPGADLTRYRPGDRDSARASLGLDPGEIVVTFVGRIQPLKAPDVLLRAAAEVISRSPGLPLRILVVGGPSGTGLARPDVLIELARSLGITAQVTFLPPQAPERLADVYRASDLVAVPSYSESFGLVAIEAQACGTPVIAADVGGLGVAVRNGETGLLVQGHRTEDWAGALESLVTAPTRLAELAAQAPRHAENFSWEHTADGLLESYRKAAVNYNNGTGPSDFSPRRARGLWRLRRTGGVRT.

A 1D-myo-inositol 3-phosphate-binding site is contributed by H15. UDP-N-acetyl-alpha-D-glucosamine is bound by residues Q21–P22 and G29. Residues D26–N31, K84, Y117, T141, and R161 contribute to the 1D-myo-inositol 3-phosphate site. R235, K240, and Q299 together coordinate UDP-N-acetyl-alpha-D-glucosamine. 3 residues coordinate Mg(2+): Y308, R309, and S311. UDP-N-acetyl-alpha-D-glucosamine is bound by residues E321 and E329. Residue T335 participates in Mg(2+) binding.

This sequence belongs to the glycosyltransferase group 1 family. MshA subfamily. As to quaternary structure, homodimer.

The catalysed reaction is 1D-myo-inositol 3-phosphate + UDP-N-acetyl-alpha-D-glucosamine = 1D-myo-inositol 2-acetamido-2-deoxy-alpha-D-glucopyranoside 3-phosphate + UDP + H(+). Functionally, catalyzes the transfer of a N-acetyl-glucosamine moiety to 1D-myo-inositol 3-phosphate to produce 1D-myo-inositol 2-acetamido-2-deoxy-glucopyranoside 3-phosphate in the mycothiol biosynthesis pathway. This is D-inositol 3-phosphate glycosyltransferase from Rhodococcus erythropolis (strain PR4 / NBRC 100887).